Reading from the N-terminus, the 121-residue chain is Large ribosomal subunit protein uL18 (121 aa).

The protein belongs to the universal ribosomal protein uL18 family. In terms of assembly, part of the 50S ribosomal subunit; part of the 5S rRNA/L5/L18/L25 subcomplex. Contacts the 5S and 23S rRNAs.

This is one of the proteins that bind and probably mediate the attachment of the 5S RNA into the large ribosomal subunit, where it forms part of the central protuberance. The polypeptide is Large ribosomal subunit protein uL18 (Leptothrix cholodnii (strain ATCC 51168 / LMG 8142 / SP-6) (Leptothrix discophora (strain SP-6))).